The sequence spans 27 residues: Toxin TdII-4 (27 aa).

The 27-residue stretch at 1-27 folds into the LCN-type CS-alpha/beta domain; the sequence is KDGYLMEPNGCKLGCLTRPAKYCWXEE.

This sequence belongs to the long (4 C-C) scorpion toxin superfamily. Sodium channel inhibitor family. Beta subfamily. In terms of tissue distribution, expressed by the venom gland.

It is found in the secreted. Its function is as follows. Beta toxins bind voltage-independently at site-4 of sodium channels (Nav) and shift the voltage of activation toward more negative potentials thereby affecting sodium channel activation and promoting spontaneous and repetitive firing. This toxin is active against mammals and also affects neuromuscular preparations of frog. This chain is Toxin TdII-4, found in Tityus discrepans (Venezuelan scorpion).